The primary structure comprises 373 residues: Histidinol-phosphate aminotransferase (373 aa).

Over residues 1 to 10 the composition is skewed to polar residues; that stretch reads MTGVPGSSIT. The disordered stretch occupies residues 1–45; sequence MTGVPGSSITLDDLPLRDDLRGKSPYGAPQLSVPVRLNTNENPHP. Lys237 is modified (N6-(pyridoxal phosphate)lysine).

It belongs to the class-II pyridoxal-phosphate-dependent aminotransferase family. Histidinol-phosphate aminotransferase subfamily. Homodimer. Pyridoxal 5'-phosphate serves as cofactor.

It catalyses the reaction L-histidinol phosphate + 2-oxoglutarate = 3-(imidazol-4-yl)-2-oxopropyl phosphate + L-glutamate. It participates in amino-acid biosynthesis; L-histidine biosynthesis; L-histidine from 5-phospho-alpha-D-ribose 1-diphosphate: step 7/9. The polypeptide is Histidinol-phosphate aminotransferase (Mycolicibacterium vanbaalenii (strain DSM 7251 / JCM 13017 / BCRC 16820 / KCTC 9966 / NRRL B-24157 / PYR-1) (Mycobacterium vanbaalenii)).